A 620-amino-acid polypeptide reads, in one-letter code: Probable serine/threonine-protein kinase RTK1 (620 aa).

Disordered stretches follow at residues 1–20 (MVKE…SLFR), 29–130 (AKIF…PVRT), 153–186 (KDAF…SNLS), 210–237 (QAST…KKKS), and 252–271 (HDNH…TKPK). Residues 7 to 18 (LHSSSSTSLSSL) show a composition bias toward low complexity. Positions 56–76 (KNTDSDQEDQIKYNKPNDRRS) are enriched in basic and acidic residues. Residue Thr58 is modified to Phosphothreonine. Ser60 is subject to Phosphoserine. Polar residues-rich tracts occupy residues 95–107 (VASS…SPTS), 165–186 (TAHS…SNLS), and 210–222 (QAST…LQHN). A Phosphoserine modification is found at Ser216. Residues 254–263 (NHHHHHHHNR) are compositionally biased toward basic residues. The Protein kinase domain occupies 302–575 (GIPGRKLGEG…MNDVVKDDWL (274 aa)). ATP contacts are provided by residues 308–316 (LGEGASGSV) and Lys330. Residue Lys334 forms a Glycyl lysine isopeptide (Lys-Gly) (interchain with G-Cter in ubiquitin) linkage. Asp430 serves as the catalytic Proton acceptor.

This sequence belongs to the protein kinase superfamily. Ser/Thr protein kinase family. As to quaternary structure, interacts with ribosome biogenesis factors ARC1, CKA2 and GUS1.

It carries out the reaction L-seryl-[protein] + ATP = O-phospho-L-seryl-[protein] + ADP + H(+). The catalysed reaction is L-threonyl-[protein] + ATP = O-phospho-L-threonyl-[protein] + ADP + H(+). In terms of biological role, probable serine/threonine-protein kinase that may be involved in ribosome biogenesis. In Saccharomyces cerevisiae (strain ATCC 204508 / S288c) (Baker's yeast), this protein is Probable serine/threonine-protein kinase RTK1 (RTK1).